A 153-amino-acid chain; its full sequence is Probable trafficking protein particle complex subunit 2 (153 aa).

This sequence belongs to the TRAPP small subunits family. Sedlin subfamily. As to quaternary structure, part of the multisubunit TRAPP (transport protein particle) complex.

The protein localises to the cytoplasm. It is found in the perinuclear region. The protein resides in the endoplasmic reticulum. Its subcellular location is the golgi apparatus. In terms of biological role, may play a role in vesicular transport from endoplasmic reticulum to Golgi. This chain is Probable trafficking protein particle complex subunit 2, found in Nematostella vectensis (Starlet sea anemone).